The sequence spans 234 residues: BTB/POZ domain-containing protein KCTD5 (234 aa).

A2 bears the N-acetylalanine mark. The 103-residue stretch at 44-146 folds into the BTB domain; the sequence is KWVRLNVGGT…LVKDKIRERD (103 aa). Residues 213 to 234 form a disordered region; the sequence is PYGTTSEPSEKAKILQERGSRM. The segment covering 220 to 234 has biased composition (basic and acidic residues); that stretch reads PSEKAKILQERGSRM.

As to quaternary structure, homopentamer. Interacts (via C-terminus) with GRASP55/GORASP2. Interacts with CUL3 and with ubiquitinated proteins. Interacts with CRY1.

The protein resides in the cytoplasm. Its subcellular location is the cytosol. The protein localises to the nucleus. In terms of biological role, its interaction with CUL3 suggests that it may act as a substrate adapter in some E3 ligase complex. Does not affect the function of Kv channel Kv2.1/KCNB1, Kv1.2/KCNA2, Kv4.2/KCND2 and Kv3.4/KCNC4. The polypeptide is BTB/POZ domain-containing protein KCTD5 (Kctd5) (Mus musculus (Mouse)).